The sequence spans 175 residues: uncharacterized protein (175 aa).

This is an uncharacterized protein from Mycobacterium tuberculosis (strain ATCC 25618 / H37Rv).